The chain runs to 395 residues: Digeranylgeranylglycerophospholipid reductase (395 aa).

Residues A15, D34, C45, A46, G48, R97, A121, D276, and G288 each coordinate FAD. Residues R329 and G365 each contribute to the a 2,3-bis-O-(geranylgeranyl)-sn-glycerol 1-phospholipid site.

It belongs to the geranylgeranyl reductase family. DGGGPL reductase subfamily. It depends on FAD as a cofactor.

It carries out the reaction a 2,3-bis-O-phytanyl-sn-glycerol 1-phospholipid + 8 A = a 2,3-bis-O-(geranylgeranyl)-sn-glycerol 1-phospholipid + 8 AH2. The catalysed reaction is 2,3-bis-O-(phytanyl)-sn-glycerol 1-phosphate + 8 A = 2,3-bis-O-(geranylgeranyl)-sn-glycerol 1-phosphate + 8 AH2. The enzyme catalyses CDP-2,3-bis-O-(geranylgeranyl)-sn-glycerol + 8 AH2 = CDP-2,3-bis-O-(phytanyl)-sn-glycerol + 8 A. It catalyses the reaction archaetidylserine + 8 AH2 = 2,3-bis-O-phytanyl-sn-glycero-3-phospho-L-serine + 8 A. Its pathway is membrane lipid metabolism; glycerophospholipid metabolism. Its function is as follows. Is involved in the reduction of 2,3-digeranylgeranylglycerophospholipids (unsaturated archaeols) into 2,3-diphytanylglycerophospholipids (saturated archaeols) in the biosynthesis of archaeal membrane lipids. Catalyzes the formation of archaetidic acid (2,3-di-O-phytanyl-sn-glyceryl phosphate) from 2,3-di-O-geranylgeranylglyceryl phosphate (DGGGP) via the hydrogenation of each double bond of the isoprenoid chains. Is also probably able to reduce double bonds of geranyl groups in CDP-2,3-bis-O-(geranylgeranyl)-sn-glycerol and archaetidylserine, thus acting at various stages in the biosynthesis of archaeal membrane lipids. The sequence is that of Digeranylgeranylglycerophospholipid reductase from Thermococcus gammatolerans (strain DSM 15229 / JCM 11827 / EJ3).